The primary structure comprises 302 residues: Large ribosomal subunit protein uL4m (302 aa).

It belongs to the universal ribosomal protein uL4 family. Component of the mitochondrial ribosome large subunit (39S) which comprises a 16S rRNA and about 50 distinct proteins.

The protein localises to the mitochondrion. The sequence is that of Large ribosomal subunit protein uL4m (mrpl4) from Danio rerio (Zebrafish).